The following is a 459-amino-acid chain: Alcohol acyl transferase 1 allele GSd (459 aa).

Residues His-164 and Asn-385 each act as proton acceptor in the active site.

It belongs to the plant acyltransferase family. As to expression, expressed at very low levels in the cortex and skin of ripe fruit.

Involved in the biosynthesis of volatile esters which confer ripe apple fruit flavor. Alcohol acyl transferase that can use a wide range of alcohols as substrate to produce esters. The sequence is that of Alcohol acyl transferase 1 allele GSd from Malus domestica (Apple).